The sequence spans 267 residues: Eukaryotic translation initiation factor 3 subunit K (267 aa).

The 188-residue stretch at 46 to 233 (FDCYANLALL…EARSEVKSER (188 aa)) folds into the PCI domain.

Belongs to the eIF-3 subunit K family. In terms of assembly, component of the eukaryotic translation initiation factor 3 (eIF-3) complex.

It is found in the cytoplasm. In terms of biological role, component of the eukaryotic translation initiation factor 3 (eIF-3) complex, which is involved in protein synthesis of a specialized repertoire of mRNAs and, together with other initiation factors, stimulates binding of mRNA and methionyl-tRNAi to the 40S ribosome. The eIF-3 complex specifically targets and initiates translation of a subset of mRNAs involved in cell proliferation. The chain is Eukaryotic translation initiation factor 3 subunit K from Aspergillus niger (strain ATCC MYA-4892 / CBS 513.88 / FGSC A1513).